The following is a 158-amino-acid chain: Transmembrane protein 50B (158 aa).

Alanine 2 bears the N-acetylalanine mark. Transmembrane regions (helical) follow at residues 28–48 (VVAGILFFTGWWIMIDAAVVY), 56–76 (HAFHTCGVFSTLAFFMINAVS), 98–118 (WLFIGFMLMFGSLIASMWILF), and 128–148 (VYPGLAVFFQNALIFFSTLIY).

Belongs to the UPF0220 family. As to quaternary structure, may form homotrimers or homodimers.

The protein localises to the endoplasmic reticulum membrane. It localises to the golgi apparatus membrane. The chain is Transmembrane protein 50B (TMEM50B) from Bos taurus (Bovine).